Here is a 253-residue protein sequence, read N- to C-terminus: Imidazole glycerol phosphate synthase subunit HisF (253 aa).

Residues Asp11 and Asp130 contribute to the active site.

Belongs to the HisA/HisF family. Heterodimer of HisH and HisF.

It is found in the cytoplasm. It carries out the reaction 5-[(5-phospho-1-deoxy-D-ribulos-1-ylimino)methylamino]-1-(5-phospho-beta-D-ribosyl)imidazole-4-carboxamide + L-glutamine = D-erythro-1-(imidazol-4-yl)glycerol 3-phosphate + 5-amino-1-(5-phospho-beta-D-ribosyl)imidazole-4-carboxamide + L-glutamate + H(+). It functions in the pathway amino-acid biosynthesis; L-histidine biosynthesis; L-histidine from 5-phospho-alpha-D-ribose 1-diphosphate: step 5/9. In terms of biological role, IGPS catalyzes the conversion of PRFAR and glutamine to IGP, AICAR and glutamate. The HisF subunit catalyzes the cyclization activity that produces IGP and AICAR from PRFAR using the ammonia provided by the HisH subunit. This Geotalea daltonii (strain DSM 22248 / JCM 15807 / FRC-32) (Geobacter daltonii) protein is Imidazole glycerol phosphate synthase subunit HisF.